Consider the following 513-residue polypeptide: Probable helicase MJ1565 (513 aa).

ATP contacts are provided by residues Arg-151, Gly-160–Asn-165, and Lys-467–Val-468.

This sequence belongs to the HerA family.

It carries out the reaction Couples ATP hydrolysis with the unwinding of duplex DNA at the replication fork by translocating in the 5'-3' direction. This creates two antiparallel DNA single strands (ssDNA). The leading ssDNA polymer is the template for DNA polymerase III holoenzyme which synthesizes a continuous strand.. The catalysed reaction is ATP + H2O = ADP + phosphate + H(+). The enzyme catalyses Couples ATP hydrolysis with the unwinding of duplex DNA by translocating in the 3'-5' direction.. Its function is as follows. A probably bidirectional DNA helicase. In Methanocaldococcus jannaschii (strain ATCC 43067 / DSM 2661 / JAL-1 / JCM 10045 / NBRC 100440) (Methanococcus jannaschii), this protein is Probable helicase MJ1565.